Reading from the N-terminus, the 570-residue chain is E3 ubiquitin-protein ligase ZFP91 (570 aa).

Over residues 1–12 the composition is skewed to basic and acidic residues; it reads MPGETEEPRPPE. Residues 1–306 form a disordered region; it reads MPGETEEPRP…PRLPKRRKKP (306 aa). Composition is skewed to low complexity over residues 31-43 and 59-68; these read QRPP…APAG and AAAAAAAAAV. The segment covering 69–82 has biased composition (basic residues); that stretch reads SRRRKAEYPRRRRS. A phosphoserine mark is found at serine 83 and serine 103. Positions 94–104 are enriched in polar residues; it reads QQPQAAKSPSP. The segment covering 119–128 has biased composition (basic and acidic residues); that stretch reads VTTDKDPKEE. The span at 207–223 shows a compositional bias: acidic residues; sequence SEEEEEEEEEMLISEEE. 2 stretches are compositionally biased toward basic and acidic residues: residues 224-245 and 252-269; these read IPFK…ETPK and KVKE…VEVE. The segment covering 270 to 282 has biased composition (acidic residues); that stretch reads VKEEENEIREDEE. C2H2-type zinc fingers lie at residues 311–336, 342–366, 372–394, 400–422, and 430–453; these read VRCE…KYQH, YVCP…AKHH, YICE…RMIH, LQCE…MKKH, and FSCN…AKSH. The segment at 338 to 368 is interaction with MAP3K14/NIK; that stretch reads LKKKYVCPHPSCGRLFRLQKQLLRHAKHHTD.

This sequence belongs to the krueppel C2H2-type zinc-finger protein family. As to quaternary structure, interacts with MAP3K14/NIK. In terms of tissue distribution, expressed ubiquitously, particularly at high level in testis. Isoform 2 is testis specific.

It is found in the nucleus. The catalysed reaction is S-ubiquitinyl-[E2 ubiquitin-conjugating enzyme]-L-cysteine + [acceptor protein]-L-lysine = [E2 ubiquitin-conjugating enzyme]-L-cysteine + N(6)-ubiquitinyl-[acceptor protein]-L-lysine.. It participates in protein modification; protein ubiquitination. Functionally, atypical E3 ubiquitin-protein ligase that mediates 'Lys-63'-linked ubiquitination of MAP3K14/NIK, leading to stabilize and activate MAP3K14/NIK. It thereby acts as an activator of the non-canonical NF-kappa-B2/NFKB2 pathway. May also play an important role in cell proliferation and/or anti-apoptosis. In Homo sapiens (Human), this protein is E3 ubiquitin-protein ligase ZFP91 (ZFP91).